The following is a 160-amino-acid chain: UPF0262 protein Oant_0325 (160 aa).

The protein belongs to the UPF0262 family.

The protein is UPF0262 protein Oant_0325 of Brucella anthropi (strain ATCC 49188 / DSM 6882 / CCUG 24695 / JCM 21032 / LMG 3331 / NBRC 15819 / NCTC 12168 / Alc 37) (Ochrobactrum anthropi).